A 379-amino-acid chain; its full sequence is Galactose-1-phosphate uridylyltransferase (379 aa).

Over residues 1 to 15 the composition is skewed to polar residues; it reads MSQSGADPEQRQQAS. Residues 1–20 are disordered; it reads MSQSGADPEQRQQASEADAM. Residue cysteine 75 coordinates Zn(2+). UDP-alpha-D-glucose contacts are provided by residues alanine 81, 97-98, and asparagine 173; that span reads ND. Histidine 184 provides a ligand contact to Zn(2+). Histidine 186 acts as the Tele-UMP-histidine intermediate in catalysis. Residue glutamine 188 participates in UDP-alpha-D-glucose binding. 4 residues coordinate Zn(2+): glutamate 202, histidine 301, histidine 319, and histidine 321. UDP-alpha-D-glucose is bound by residues 334-337 and 339-340; these read KFMV and YE.

It belongs to the galactose-1-phosphate uridylyltransferase type 1 family. In terms of assembly, homodimer. Requires Zn(2+) as cofactor.

It catalyses the reaction alpha-D-galactose 1-phosphate + UDP-alpha-D-glucose = alpha-D-glucose 1-phosphate + UDP-alpha-D-galactose. Its pathway is carbohydrate metabolism; galactose metabolism. In terms of biological role, plays an important role in galactose metabolism. This chain is Galactose-1-phosphate uridylyltransferase (Galt), found in Rattus norvegicus (Rat).